The sequence spans 620 residues: Protein AFR1 (620 aa).

Over residues 1-12 (MEGSYLSAQENQ) the composition is skewed to polar residues. The disordered stretch occupies residues 1–20 (MEGSYLSAQENQPIPERLIP). Phosphoserine occurs at positions 472 and 526.

This sequence to yeast YER158C.

In terms of biological role, acts in conjunction with the alpha-factor receptor to promote morphogenesis and adaptation. The sequence is that of Protein AFR1 (AFR1) from Saccharomyces cerevisiae (strain ATCC 204508 / S288c) (Baker's yeast).